We begin with the raw amino-acid sequence, 38 residues long: Large ribosomal subunit protein bL36 (38 aa).

This sequence belongs to the bacterial ribosomal protein bL36 family.

This Roseiflexus sp. (strain RS-1) protein is Large ribosomal subunit protein bL36.